The chain runs to 441 residues: Phosphoribosylamine--glycine ligase (441 aa).

Residues Arg112–Lys319 form the ATP-grasp domain. Ile139–Thr196 is a binding site for ATP. Gln277, Glu289, and Asn291 together coordinate Mg(2+). The Mn(2+) site is built by Gln277, Glu289, and Asn291.

This sequence belongs to the GARS family. It depends on Mg(2+) as a cofactor. Mn(2+) is required as a cofactor.

It carries out the reaction 5-phospho-beta-D-ribosylamine + glycine + ATP = N(1)-(5-phospho-beta-D-ribosyl)glycinamide + ADP + phosphate + H(+). The protein operates within purine metabolism; IMP biosynthesis via de novo pathway; N(1)-(5-phospho-D-ribosyl)glycinamide from 5-phospho-alpha-D-ribose 1-diphosphate: step 2/2. The chain is Phosphoribosylamine--glycine ligase from Methanosarcina acetivorans (strain ATCC 35395 / DSM 2834 / JCM 12185 / C2A).